We begin with the raw amino-acid sequence, 520 residues long: Cytochrome P450 4F3 (520 aa).

The chain crosses the membrane as a helical span at residues 11-31; that stretch reads LWPMAASPWLLLLLVGASWLL. Residues Glu328 and Cys468 each coordinate heme.

It belongs to the cytochrome P450 family. Requires heme as cofactor. Selectively expressed in blood neutrophils and bone marrow cells. Coexpressed with CYP4F3B in prostate, ileum and trachea. As to expression, selectively expressed in liver and kidney. It is also the predominant CYP4F isoform in trachea and tissues of the gastrointestinal tract.

It localises to the endoplasmic reticulum membrane. The protein resides in the microsome membrane. It carries out the reaction an organic molecule + reduced [NADPH--hemoprotein reductase] + O2 = an alcohol + oxidized [NADPH--hemoprotein reductase] + H2O + H(+). The catalysed reaction is leukotriene B4 + reduced [NADPH--hemoprotein reductase] + O2 = 20-hydroxy-leukotriene B4 + oxidized [NADPH--hemoprotein reductase] + H2O + H(+). The enzyme catalyses 20-hydroxy-leukotriene B4 + reduced [NADPH--hemoprotein reductase] + O2 = 20-oxo-leukotriene B4 + oxidized [NADPH--hemoprotein reductase] + 2 H2O + H(+). It catalyses the reaction 20-oxo-leukotriene B4 + reduced [NADPH--hemoprotein reductase] + O2 = 20-carboxy-leukotriene B4 + oxidized [NADPH--hemoprotein reductase] + H2O + 2 H(+). It carries out the reaction (5Z,8Z,11Z)-eicosatrienoate + reduced [NADPH--hemoprotein reductase] + O2 = 20-hydroxy-(5Z,8Z,11Z)-eicosatrienoate + oxidized [NADPH--hemoprotein reductase] + H2O + H(+). The catalysed reaction is (5Z,8Z,11Z,14Z)-eicosatetraenoate + reduced [NADPH--hemoprotein reductase] + O2 = 20-hydroxy-(5Z,8Z,11Z,14Z)-eicosatetraenoate + oxidized [NADPH--hemoprotein reductase] + H2O + H(+). The enzyme catalyses (5Z,8Z,11Z,14Z,17Z)-eicosapentaenoate + reduced [NADPH--hemoprotein reductase] + O2 = 19-hydroxy-(5Z,8Z,11Z,14Z,17Z)-eicosapentaenoate + oxidized [NADPH--hemoprotein reductase] + H2O + H(+). It catalyses the reaction (5Z,8Z,11Z,14Z,17Z)-eicosapentaenoate + reduced [NADPH--hemoprotein reductase] + O2 = 20-hydroxy-(5Z,8Z,11Z,14Z,17Z)-eicosapentaenoate + oxidized [NADPH--hemoprotein reductase] + H2O + H(+). It carries out the reaction (4Z,7Z,10Z,13Z,16Z,19Z)-docosahexaenoate + reduced [NADPH--hemoprotein reductase] + O2 = 21-hydroxy-(4Z,7Z,10Z,13Z,16Z,19Z)-docosahexaenoate + oxidized [NADPH--hemoprotein reductase] + H2O + H(+). The catalysed reaction is (4Z,7Z,10Z,13Z,16Z,19Z)-docosahexaenoate + reduced [NADPH--hemoprotein reductase] + O2 = 22-hydroxy-(4Z,7Z,10Z,13Z,16Z,19Z)-docosahexaenoate + oxidized [NADPH--hemoprotein reductase] + H2O + H(+). The enzyme catalyses 8,9-epoxy-(5Z,11Z,14Z)-eicosatrienoate + reduced [NADPH--hemoprotein reductase] + O2 = 20-hydroxy-8,9-epoxy-(5Z,11Z,14Z)-eicosatrienoate + oxidized [NADPH--hemoprotein reductase] + H2O + H(+). It catalyses the reaction 11,12-epoxy-(5Z,8Z,14Z)-eicosatrienoate + reduced [NADPH--hemoprotein reductase] + O2 = 20-hydroxy-11,12-epoxy-(5Z,8Z,14Z)-eicosatrienoate + oxidized [NADPH--hemoprotein reductase] + H2O + H(+). It carries out the reaction 14,15-epoxy-(5Z,8Z,11Z)-eicosatrienoate + reduced [NADPH--hemoprotein reductase] + O2 = 20-hydroxy-14,15-epoxy-(5Z,8Z,11Z)-eicosatrienoate + oxidized [NADPH--hemoprotein reductase] + H2O + H(+). The catalysed reaction is 12,13-epoxy-(9Z)-octadecenoate + reduced [NADPH--hemoprotein reductase] + O2 = 18-hydroxy-12,13-epoxy-(9Z)-octadecenoate + oxidized [NADPH--hemoprotein reductase] + H2O + H(+). The enzyme catalyses 9,10-epoxy-(12Z)-octadecenoate + reduced [NADPH--hemoprotein reductase] + O2 = 18-hydroxy-9,10-epoxy-(12Z)-octadecenoate + oxidized [NADPH--hemoprotein reductase] + H2O + H(+). It catalyses the reaction 9,10-epoxyoctadecanoate + reduced [NADPH--hemoprotein reductase] + O2 = 18-hydroxy-9,10-epoxy-octadecanoate + oxidized [NADPH--hemoprotein reductase] + H2O + H(+). It carries out the reaction (12R)-hydroxy-(9Z)-octadecenoate + reduced [NADPH--hemoprotein reductase] + O2 = (12R),18-dihydroxy-(9Z)-octadecenoate + oxidized [NADPH--hemoprotein reductase] + H2O + H(+). The catalysed reaction is 12-hydroxyoctadecanoate + reduced [NADPH--hemoprotein reductase] + O2 = 12,18-dihydroxyoctadecanoate + oxidized [NADPH--hemoprotein reductase] + H2O + H(+). The enzyme catalyses 5-hydroxy-(6E,8Z,11Z,14Z)-eicosatetraenoate + reduced [NADPH--hemoprotein reductase] + O2 = 5,20-dihydroxy-(6E,8Z,11Z,14Z)-eicosatetraenoate + oxidized [NADPH--hemoprotein reductase] + H2O + H(+). It catalyses the reaction 8-hydroxy-(5Z,9E,11Z,14Z)-eicosatetraenoate + reduced [NADPH--hemoprotein reductase] + O2 = 8,20-dihydroxy-(5Z,9E,11Z,14Z)-eicosatetraenoate + oxidized [NADPH--hemoprotein reductase] + H2O + H(+). It carries out the reaction 12-hydroxy-(5Z,8Z,10E,14Z)-eicosatetraenoate + reduced [NADPH--hemoprotein reductase] + O2 = 12,20-dihydroxy-(5Z,8Z,10E,14Z)-eicosatetraenoate + oxidized [NADPH--hemoprotein reductase] + H2O + H(+). The catalysed reaction is 5-hydroxy-(6E,8Z,11Z,14Z,17Z)-eicosapentaenoate + reduced [NADPH--hemoprotein reductase] + O2 = 5,20-dihydroxy-(6E,8Z,11Z,14Z,17Z)-eicosapentaenoate + oxidized [NADPH--hemoprotein reductase] + H2O + H(+). The enzyme catalyses lipoxin A4 + reduced [NADPH--hemoprotein reductase] + O2 = 20-hydroxy-lipoxin A4 + oxidized [NADPH--hemoprotein reductase] + H2O + H(+). It catalyses the reaction lipoxin B4 + reduced [NADPH--hemoprotein reductase] + O2 = 20-hydroxy-lipoxin B4 + oxidized [NADPH--hemoprotein reductase] + H2O + H(+). It carries out the reaction 22-hydroxydocosanoate + reduced [NADPH--hemoprotein reductase] + O2 = 22-oxodocosanoate + oxidized [NADPH--hemoprotein reductase] + 2 H2O + H(+). The catalysed reaction is 22-oxodocosanoate + reduced [NADPH--hemoprotein reductase] + O2 = docosanedioate + oxidized [NADPH--hemoprotein reductase] + H2O + 2 H(+). The enzyme catalyses docosanoate + reduced [NADPH--hemoprotein reductase] + O2 = 22-hydroxydocosanoate + oxidized [NADPH--hemoprotein reductase] + H2O + H(+). It catalyses the reaction tetracosanoate + reduced [NADPH--hemoprotein reductase] + O2 = 24-hydroxytetracosanoate + oxidized [NADPH--hemoprotein reductase] + H2O + H(+). It carries out the reaction hexacosanoate + reduced [NADPH--hemoprotein reductase] + O2 = 26-hydroxyhexacosanoate + oxidized [NADPH--hemoprotein reductase] + H2O + H(+). The catalysed reaction is 26-hydroxyhexacosanoate + reduced [NADPH--hemoprotein reductase] + O2 = 26-oxohexacosanoate + oxidized [NADPH--hemoprotein reductase] + 2 H2O + H(+). The enzyme catalyses 26-oxohexacosanoate + reduced [NADPH--hemoprotein reductase] + O2 = hexacosanedioate + oxidized [NADPH--hemoprotein reductase] + H2O + 2 H(+). It catalyses the reaction 3-hydroxyoctadecanoate + reduced [NADPH--hemoprotein reductase] + O2 = 3,18-dihydroxyoctadecanoate + oxidized [NADPH--hemoprotein reductase] + H2O + H(+). It carries out the reaction 3-hydroxyhexadecanoate + reduced [NADPH--hemoprotein reductase] + O2 = 3,16-dihydroxyhexadecanoate + oxidized [NADPH--hemoprotein reductase] + H2O + H(+). It functions in the pathway lipid metabolism; leukotriene B4 degradation. The protein operates within lipid metabolism; arachidonate metabolism. With respect to regulation, inhibited by carbon monoxide (CO). A cytochrome P450 monooxygenase involved in the metabolism of various endogenous substrates, including fatty acids and their oxygenated derivatives (oxylipins). Mechanistically, uses molecular oxygen inserting one oxygen atom into a substrate, and reducing the second into a water molecule, with two electrons provided by NADPH via cytochrome P450 reductase (CPR; NADPH-ferrihemoprotein reductase). May play a role in inactivation of pro-inflammatory and anti-inflammatory oxylipins during the resolution of inflammation. In terms of biological role, catalyzes predominantly the oxidation of the terminal carbon (omega-oxidation) of oxylipins in myeloid cells, displaying higher affinity for arachidonate metabolite leukotriene B4 (LTB4). Inactivates LTB4 via three successive oxidative transformations to 20-hydroxy-LTB4, then to 20-oxo-LTB4 and to 20-carboxy-LTB4. Has omega-hydroxylase activity toward long-chain fatty acid epoxides with preference for 8,9-epoxy-(5Z,11Z,14Z)-eicosatrienoate (EET) and 9,10-epoxyoctadecanoate. Omega-hydroxylates monohydroxy polyunsaturated fatty acids (PUFAs), including hydroxyeicosatetraenoates (HETEs) and hydroxyeicosapentaenoates (HEPEs), to dihydroxy compounds. Contributes to the degradation of saturated very long-chain fatty acids (VLCFAs) such as docosanoic acid, by catalyzing successive omega-oxidations to the corresponding dicarboxylic acid, thereby initiating chain shortening. Has low hydroxylase activity toward PUFAs. Functionally, catalyzes predominantly the oxidation of the terminal carbon (omega-oxidation) of polyunsaturated fatty acids (PUFAs). Participates in the conversion of arachidonic acid to 20-hydroxyeicosatetraenoic acid (20-HETE), a signaling molecule acting both as vasoconstrictive and natriuretic with overall effect on arterial blood pressure. Has high omega-hydroxylase activity toward other PUFAs, including eicosatrienoic acid (ETA), eicosapentaenoic acid (EPA) and docosahexaenoic acid (DHA). Can also catalyze the oxidation of the penultimate carbon (omega-1 oxidation) of PUFAs with lower efficiency. Contributes to the degradation of saturated very long-chain fatty acids (VLCFAs) such as docosanoic acid and hexacosanoic acid, by catalyzing successive omega-oxidations to the corresponding dicarboxylic acids, thereby initiating chain shortening. Omega-hydroxylates long-chain 3-hydroxy fatty acids, likely initiating the oxidative conversion to the corresponding 3-hydroxydicarboxylic fatty acids. Has omega-hydroxylase activity toward long-chain fatty acid epoxides with preference for 8,9-epoxy-(5Z,11Z,14Z)-eicosatrienoate (EET) and 9,10-epoxyoctadecanoate. This chain is Cytochrome P450 4F3, found in Homo sapiens (Human).